Reading from the N-terminus, the 1011-residue chain is Phosphoenolpyruvate carboxylase (1011 aa).

Active-site residues include histidine 207 and lysine 658.

This sequence belongs to the PEPCase type 1 family. It depends on Mg(2+) as a cofactor.

The enzyme catalyses oxaloacetate + phosphate = phosphoenolpyruvate + hydrogencarbonate. Functionally, forms oxaloacetate, a four-carbon dicarboxylic acid source for the tricarboxylic acid cycle. The polypeptide is Phosphoenolpyruvate carboxylase (ppc) (Thermosynechococcus vestitus (strain NIES-2133 / IAM M-273 / BP-1)).